Reading from the N-terminus, the 1026-residue chain is Cadherin-like and PC-esterase domain-containing protein 1 (1026 aa).

The N-terminal stretch at 1-34 (MVCRPVFPCRRRFCPRPFLVGLVVAICLFYQTLT) is a signal peptide. 6 N-linked (GlcNAc...) asparagine glycosylation sites follow: asparagine 251, asparagine 404, asparagine 413, asparagine 737, asparagine 791, and asparagine 985.

The protein belongs to the PC-esterase family.

The chain is Cadherin-like and PC-esterase domain-containing protein 1 (CPED1) from Homo sapiens (Human).